A 129-amino-acid polypeptide reads, in one-letter code: Putative membrane protein insertion efficiency factor (129 aa).

The protein belongs to the UPF0161 family.

It localises to the cell inner membrane. Functionally, could be involved in insertion of integral membrane proteins into the membrane. The polypeptide is Putative membrane protein insertion efficiency factor (Rhodopseudomonas palustris (strain ATCC BAA-98 / CGA009)).